A 200-amino-acid chain; its full sequence is NADH-quinone oxidoreductase subunit I (200 aa).

4Fe-4S ferredoxin-type domains lie at 73-102 and 112-141; these read RLLESGNERCIGCGLCEKICVSNCIRMETT and LNYSINFGRCVYCGLCADVCPELAIVHGGD. The [4Fe-4S] cluster site is built by cysteine 82, cysteine 85, cysteine 88, cysteine 92, cysteine 121, cysteine 124, cysteine 127, and cysteine 131.

The protein belongs to the complex I 23 kDa subunit family. NDH-1 is composed of 14 different subunits. Subunits NuoA, H, J, K, L, M, N constitute the membrane sector of the complex. [4Fe-4S] cluster is required as a cofactor.

The protein localises to the cell inner membrane. The enzyme catalyses a quinone + NADH + 5 H(+)(in) = a quinol + NAD(+) + 4 H(+)(out). In terms of biological role, NDH-1 shuttles electrons from NADH, via FMN and iron-sulfur (Fe-S) centers, to quinones in the respiratory chain. The immediate electron acceptor for the enzyme in this species is believed to be ubiquinone. Couples the redox reaction to proton translocation (for every two electrons transferred, four hydrogen ions are translocated across the cytoplasmic membrane), and thus conserves the redox energy in a proton gradient. The polypeptide is NADH-quinone oxidoreductase subunit I (Campylobacter hominis (strain ATCC BAA-381 / DSM 21671 / CCUG 45161 / LMG 19568 / NCTC 13146 / CH001A)).